The following is a 125-amino-acid chain: Glycine cleavage system H protein (125 aa).

The region spanning 22–103 is the Lipoyl-binding domain; the sequence is VFVVGITENA…AFTAWIFKIK (82 aa). Lysine 63 carries the post-translational modification N6-lipoyllysine.

It belongs to the GcvH family. As to quaternary structure, the glycine cleavage system is composed of four proteins: P, T, L and H. (R)-lipoate is required as a cofactor.

In terms of biological role, the glycine cleavage system catalyzes the degradation of glycine. The H protein shuttles the methylamine group of glycine from the P protein to the T protein. The sequence is that of Glycine cleavage system H protein from Bordetella avium (strain 197N).